A 155-amino-acid chain; its full sequence is Ribosome maturation factor RimP (155 aa).

This sequence belongs to the RimP family.

It is found in the cytoplasm. Functionally, required for maturation of 30S ribosomal subunits. This is Ribosome maturation factor RimP from Dichelobacter nodosus (strain VCS1703A).